The following is a 1232-amino-acid chain: Anion exchange protein 3 (1232 aa).

The span at 1–11 (MANGVIPPPGG) shows a compositional bias: pro residues. Disordered stretches follow at residues 1 to 316 (MANG…KLDR) and 429 to 498 (NDDK…GDGH). Over 1–708 (MANGVIPPPG…DLRDALHSQC (708 aa)) the chain is Cytoplasmic. A compositionally biased stretch (basic and acidic residues) spans 58–75 (DPEKPSRSYSERDFEFHR). 2 stretches are compositionally biased toward basic residues: residues 76 to 97 (HTSHHTHHPLSARLPPPHKLRR) and 104 to 113 (RHTRRKRKKE). Residues 134–152 (VDEEEEEEEEEEGESEAEP) show a composition bias toward acidic residues. 4 positions are modified to phosphoserine: serine 167, serine 170, serine 175, and serine 198. Residues 200–215 (QHSSSSPSPRARASRL) are compositionally biased toward low complexity. Over residues 267–279 (DDMKSHRLEDNPG) the composition is skewed to basic and acidic residues. Over residues 280 to 289 (VRRHLVKKPS) the composition is skewed to basic residues. Arginine 295 is modified (omega-N-methylarginine). Over residues 305 to 316 (LRRKKKKKKLDR) the composition is skewed to basic residues. Positions 440 to 450 (NPSSSSMNSVL) are enriched in polar residues. The segment covering 481–498 (HDPDAKEKPLHMPGGDGH) has biased composition (basic and acidic residues). Helical transmembrane passes span 709-731 (VAAVLFIYFAALSPAITFGGLLG), 737-774 (LMGVSELIVSTAVLGVLFSLLGAQPLLVVGFSGPLLVF), 794-816 (VWVGLWLVVFVLALVAAEGSFLV), 826-847 (IFAFLISLIFIYETFYKLYKVF), and 893-910 (ALLSLILMLGTFFIAFFL). Residues 709-1232 (VAAVLFIYFA…DEYNELHMPV (524 aa)) are membrane (anion exchange). The Cytoplasmic segment spans residues 911–925 (RKFRNSRFLGGKARR). Helical transmembrane passes span 926–946 (IIGDFGIPISILVMVLVDYSI), 980–1002 (PFPPWMMVAAAVPALLVLILIFM), 1028–1049 (LLLIGSLGGLCGLFGLPWLTAA), 1083–1128 (VTGV…IQLS), and 1155–1191 (MHLFTCIQLGCIALLWVVKSTAASLAFPFLLLLTVPL). A lipid anchor (S-palmitoyl cysteine) is attached at cysteine 1165.

This sequence belongs to the anion exchanger (TC 2.A.31) family. As to expression, expressed in the heart.

Its subcellular location is the cell membrane. It carries out the reaction hydrogencarbonate(in) + chloride(out) = hydrogencarbonate(out) + chloride(in). In terms of biological role, sodium-independent anion exchanger which mediates the electroneutral exchange of chloride for bicarbonate ions across the cell membrane. May be involved in the regulation of intracellular pH, and the modulation of cardiac action potential. This Homo sapiens (Human) protein is Anion exchange protein 3 (SLC4A3).